The following is a 361-amino-acid chain: Pyruvate dehydrogenase E1 component subunit beta, mitochondrial (361 aa).

The transit peptide at 1-27 directs the protein to the mitochondrion; the sequence is MAVNGCMRLLRNGLTSACALEQSVRRL. Glu90 serves as a coordination point for thiamine diphosphate. K(+) contacts are provided by Ile143, Ala191, Val192, Asp194, and Asn196.

As to quaternary structure, heterotetramer of two PDHA1 and two PDHB subunits. The heterotetramer interacts with DLAT, and is part of the multimeric pyruvate dehydrogenase complex that contains multiple copies of pyruvate dehydrogenase (E1), dihydrolipoamide acetyltransferase (DLAT, E2) and lipoamide dehydrogenase (DLD, E3). The cofactor is thiamine diphosphate.

It localises to the mitochondrion matrix. It catalyses the reaction N(6)-[(R)-lipoyl]-L-lysyl-[protein] + pyruvate + H(+) = N(6)-[(R)-S(8)-acetyldihydrolipoyl]-L-lysyl-[protein] + CO2. Its function is as follows. The pyruvate dehydrogenase complex catalyzes the overall conversion of pyruvate to acetyl-CoA and CO(2), and thereby links the glycolytic pathway to the tricarboxylic cycle. This chain is Pyruvate dehydrogenase E1 component subunit beta, mitochondrial, found in Ascaris suum (Pig roundworm).